The following is a 240-amino-acid chain: Adiponectin (240 aa).

An N-terminal signal peptide occupies residues 1–17 (MLLQGALLLLLALPSHG). Lys-28 is modified (5-hydroxylysine). An O-linked (Gal...) hydroxylysine glycan is attached at Lys-28. The segment at 29–100 (GACAGWMAGI…GTPGRKGEPG (72 aa)) is disordered. Cys-31 bears the S-(2-succinyl)cysteine mark. Residues Pro-39, Pro-42, and Pro-48 each carry the 4-hydroxyproline modification. The Collagen-like domain maps to 43-102 (GHNGTPGRDGRDGTPGEKGEKGDPGLVGPKGDTGETGITGIEGPRGFPGTPGRKGEPGES). Positions 50–65 (RDGRDGTPGEKGEKGD) are enriched in basic and acidic residues. A 5-hydroxylysine mark is found at Lys-60, Lys-63, and Lys-72. Lys-60, Lys-63, and Lys-72 each carry an O-linked (Gal...) hydroxylysine glycan. Residue Pro-86 is modified to 4-hydroxyproline. Residue Lys-96 is modified to 5-hydroxylysine. O-linked (Gal...) hydroxylysine glycosylation occurs at Lys-96. The C1q domain occupies 103 to 240 (AYVYRSAFSV…GFLLYHNIVE (138 aa)).

In terms of assembly, homomultimer. Forms trimers, hexamers and 12- to 18-mers. The trimers (low molecular weight complexes / LMW) are assembled via non-covalent interactions of the collagen-like domains in a triple helix and hydrophobic interactions within the globular C1q domain. Several trimers can associate to form disulfide-linked hexamers (middle molecular weight complexes / MMW) and larger complexes (higher molecular weight / HMW). The HMW-complex assembly is also modulated by the degree of lysine hydroxylation and glycosylation. LMW, MMW and HMW complexes bind to HBEGF, MMW and HMW complexes bind to PDGFB, and HMW complex binds to FGF2. Interacts with CTRP9 via the C1q domain (heterotrimeric complex). In terms of processing, HMW complexes are more extensively glycosylated than smaller oligomers. Hydroxylation and glycosylation of the lysine residues within the collagen-like domain of adiponectin seem to be critically involved in regulating the formation and/or secretion of HMW complexes and consequently contribute to the insulin-sensitizing activity of adiponectin in hepatocytes. Post-translationally, O-glycosylated. O-linked glycans on hydroxylysine residues consist of Glc-Gal disaccharides bound to the oxygen atom of post-translationally added hydroxyl groups. O-linked glycosylations elsewhere disialylated with the structure Neu5Acalpha2-&gt;8Neu5Acalpha2-&gt;3Gal. Sialylated by alpha 2,8-sialyltransferase III. Desialylated forms are rapidly cleared from the circulation. Not N-glycosylated. Succination of Cys-31 by the Krebs cycle intermediate fumarate, which leads to S-(2-succinyl)cysteine residues, inhibits polymerization and secretion of adiponectin. Adiponectin is a major target for succination in both adipocytes and adipose tissue of diabetic mammals. It was proposed that succination of proteins is a biomarker of mitochondrial stress and accumulation of Krebs cycle intermediates in adipose tissue in diabetes and that succination of adiponectin may contribute to the decrease in plasma adiponectin in diabetes.

Its subcellular location is the secreted. Polymerization and secretion of adiponectin is inhibited by succination of cysteine residues by the Krebs cycle intermediate fumarate, which leads to S-(2-succinyl)cysteine residues. In terms of biological role, important adipokine involved in the control of fat metabolism and insulin sensitivity, with direct anti-diabetic, anti-atherogenic and anti-inflammatory activities. Stimulates AMPK phosphorylation and activation in the liver and the skeletal muscle, enhancing glucose utilization and fatty-acid combustion. Antagonizes TNF-alpha by negatively regulating its expression in various tissues such as liver and macrophages, and also by counteracting its effects. Inhibits endothelial NF-kappa-B signaling through a cAMP-dependent pathway. May play a role in cell growth, angiogenesis and tissue remodeling by binding and sequestering various growth factors with distinct binding affinities, depending on the type of complex, LMW, MMW or HMW. This Bos taurus (Bovine) protein is Adiponectin (ADIPOQ).